Reading from the N-terminus, the 29-residue chain is Snake venom metalloproteinase bothrolysin (29 aa).

A Peptidase M12B domain is found at 6 to 29; that stretch reads RYIELFLVVDSGMFMKYNGNSDKI. E9 is a binding site for Ca(2+).

This sequence belongs to the venom metalloproteinase (M12B) family. Zn(2+) is required as a cofactor. Expressed by the venom gland.

The protein resides in the secreted. The enzyme catalyses Cleavage of 4-Gln-|-His-5, 9-Ser-|-His-10 and 14-Ala-|-Leu-15 of insulin B chain and Pro-|-Phe of angiotensin I.. Snake venom zinc metalloproteinase that impairs hemostasis in the envenomed animal. This Bothrops jararaca (Jararaca) protein is Snake venom metalloproteinase bothrolysin.